A 316-amino-acid polypeptide reads, in one-letter code: Methionyl-tRNA formyltransferase (316 aa).

111–114 (SLLP) provides a ligand contact to (6S)-5,6,7,8-tetrahydrofolate.

Belongs to the Fmt family.

It catalyses the reaction L-methionyl-tRNA(fMet) + (6R)-10-formyltetrahydrofolate = N-formyl-L-methionyl-tRNA(fMet) + (6S)-5,6,7,8-tetrahydrofolate + H(+). In terms of biological role, attaches a formyl group to the free amino group of methionyl-tRNA(fMet). The formyl group appears to play a dual role in the initiator identity of N-formylmethionyl-tRNA by promoting its recognition by IF2 and preventing the misappropriation of this tRNA by the elongation apparatus. The sequence is that of Methionyl-tRNA formyltransferase from Limosilactobacillus fermentum (strain NBRC 3956 / LMG 18251) (Lactobacillus fermentum).